Reading from the N-terminus, the 329-residue chain is Beta-ketoacyl-[acyl-carrier-protein] synthase III (329 aa).

Residues C114 and H254 contribute to the active site. Residues 255–259 (QANLR) are ACP-binding. Residue N284 is part of the active site.

The protein belongs to the thiolase-like superfamily. FabH family. In terms of assembly, homodimer.

The protein resides in the cytoplasm. The enzyme catalyses malonyl-[ACP] + acetyl-CoA + H(+) = 3-oxobutanoyl-[ACP] + CO2 + CoA. It functions in the pathway lipid metabolism; fatty acid biosynthesis. Catalyzes the condensation reaction of fatty acid synthesis by the addition to an acyl acceptor of two carbons from malonyl-ACP. Catalyzes the first condensation reaction which initiates fatty acid synthesis and may therefore play a role in governing the total rate of fatty acid production. Possesses both acetoacetyl-ACP synthase and acetyl transacylase activities. Its substrate specificity determines the biosynthesis of branched-chain and/or straight-chain of fatty acids. The sequence is that of Beta-ketoacyl-[acyl-carrier-protein] synthase III from Roseiflexus sp. (strain RS-1).